Consider the following 252-residue polypeptide: D-aminoacyl-tRNA deacylase (252 aa).

Belongs to the DtdA deacylase family. Monomer. Zn(2+) serves as cofactor.

The enzyme catalyses a D-aminoacyl-tRNA + H2O = a tRNA + a D-alpha-amino acid + H(+). It carries out the reaction glycyl-tRNA(Ala) + H2O = tRNA(Ala) + glycine + H(+). Its function is as follows. D-aminoacyl-tRNA deacylase with broad substrate specificity. By recycling D-aminoacyl-tRNA to D-amino acids and free tRNA molecules, this enzyme counteracts the toxicity associated with the formation of D-aminoacyl-tRNA entities in vivo. The sequence is that of D-aminoacyl-tRNA deacylase from Pyrobaculum arsenaticum (strain DSM 13514 / JCM 11321 / PZ6).